Reading from the N-terminus, the 611-residue chain is Protein decapping 5 (611 aa).

The region spanning 9 to 92 (KSSSAADSYV…IKDLQVKASP (84 aa)) is the Sm domain. Disordered regions lie at residues 111 to 153 (HYPS…AMPL), 183 to 238 (GLPQ…PSSL), 264 to 301 (SSSLQSTLQSAPSPSLASEMAPPLLSNKAPITAPPTLP), 318 to 362 (EAST…DKPK), 396 to 455 (QVSS…AGRS), and 519 to 611 (FFDS…NRTT). Composition is skewed to polar residues over residues 117–140 (PTSGSLPSTASGSLPDISSHNGQP) and 203–214 (NSLQQPLQYPNF). Low complexity predominate over residues 264-281 (SSSLQSTLQSAPSPSLAS). 3 stretches are compositionally biased toward polar residues: residues 318 to 330 (EASTGLPLSNKPS), 396 to 413 (QVSSSAGLEQSVPVTSEA), and 424 to 437 (ARPTQKPNGHSFPN). Over residues 441 to 453 (YRGRGRGRGRGAG) the composition is skewed to basic residues. The DFDF domain maps to 453 to 489 (GRSHQVMKFTEDFDFTAMNEKFNKDEVWGHLGKSTTL). Residues 512-527 (PVYNKDDFFDSLSSNT) carry the FFD box motif. Basic and acidic residues predominate over residues 528-547 (IDRESQNSRPRFSEQRKLDT). Positions 534-554 (NSRPRFSEQRKLDTETFGEFS) match the TFG box motif. Positions 559–604 (GRGGRGGYGRNNGYSRGGYGGRGYGGYGGRGGGGGGYGYGGRGQGR) are enriched in gly residues.

The protein belongs to the LSM14 family. Homodimer. Component of the decapping complex. Interacts with DCP1 and DCP2.

It is found in the cytoplasm. It localises to the P-body. Its function is as follows. As a component of the decapping complex, involved in the degradation of mRNAs. Promotes P-body formation. Translational repressor. This is Protein decapping 5 (DCP5) from Arabidopsis thaliana (Mouse-ear cress).